The primary structure comprises 53 residues: IgA-inducing protein homolog (53 aa).

An N-terminal signal peptide occupies residues Met1–Gly30.

It localises to the secreted. In terms of biological role, enhances IgA secretion from B-cells stimulated via CD40. The sequence is that of IgA-inducing protein homolog (IGIP) from Homo sapiens (Human).